The primary structure comprises 91 residues: Small ribosomal subunit protein uS19 (91 aa).

This sequence belongs to the universal ribosomal protein uS19 family.

Its function is as follows. Protein S19 forms a complex with S13 that binds strongly to the 16S ribosomal RNA. In Prochlorococcus marinus (strain MIT 9211), this protein is Small ribosomal subunit protein uS19.